Consider the following 508-residue polypeptide: Maturase K (508 aa).

Belongs to the intron maturase 2 family. MatK subfamily.

It localises to the plastid. It is found in the chloroplast. Usually encoded in the trnK tRNA gene intron. Probably assists in splicing its own and other chloroplast group II introns. This chain is Maturase K, found in Coronilla varia (Crown vetch).